Consider the following 738-residue polypeptide: uncharacterized protein (738 aa).

3 stretches are compositionally biased toward polar residues: residues 1–34 (MSSS…QVSS), 140–169 (TSSD…QSPP), and 177–197 (KPFS…STKD). Disordered stretches follow at residues 1–51 (MSSS…AASI) and 140–197 (TSSD…STKD). In terms of domain architecture, RRM spans 363–434 (SRLFLGHLNT…QKLHLEISKI (72 aa)). The disordered stretch occupies residues 466-487 (YPTSSRKRTRSPLMSKGKSYDR).

This is an uncharacterized protein from Schizosaccharomyces pombe (strain 972 / ATCC 24843) (Fission yeast).